Reading from the N-terminus, the 266-residue chain is Undecaprenyl-diphosphatase (266 aa).

The next 8 helical transmembrane spans lie at 3 to 23 (MSLL…FLPV), 41 to 61 (GTET…VVLY), 86 to 106 (VLVG…AIKA), 108 to 128 (LNTP…ILVI), 149 to 171 (FGVG…ATIM), 184 to 204 (AEYS…LALW), 220 to 240 (IGFV…LGVV), and 245 to 265 (FAPF…WLLA).

Belongs to the UppP family.

The protein resides in the cell inner membrane. The enzyme catalyses di-trans,octa-cis-undecaprenyl diphosphate + H2O = di-trans,octa-cis-undecaprenyl phosphate + phosphate + H(+). Its function is as follows. Catalyzes the dephosphorylation of undecaprenyl diphosphate (UPP). Confers resistance to bacitracin. In Rhizorhabdus wittichii (strain DSM 6014 / CCUG 31198 / JCM 15750 / NBRC 105917 / EY 4224 / RW1) (Sphingomonas wittichii), this protein is Undecaprenyl-diphosphatase.